The primary structure comprises 317 residues: Large ribosomal subunit protein uL10 (317 aa).

This sequence belongs to the universal ribosomal protein uL10 family. P0 forms a pentameric complex by interaction with dimers of P1 and P2. Post-translationally, phosphorylated.

Ribosomal protein P0 is the functional equivalent of E.coli protein L10. In Ictalurus punctatus (Channel catfish), this protein is Large ribosomal subunit protein uL10 (rplp0).